The chain runs to 419 residues: Enolase (419 aa).

Glutamine 161 serves as a coordination point for (2R)-2-phosphoglycerate. Glutamate 205 (proton donor) is an active-site residue. Mg(2+) contacts are provided by aspartate 240, glutamate 283, and aspartate 309. 4 residues coordinate (2R)-2-phosphoglycerate: lysine 334, arginine 363, serine 364, and lysine 385. Residue lysine 334 is the Proton acceptor of the active site.

This sequence belongs to the enolase family. Mg(2+) serves as cofactor.

The protein resides in the cytoplasm. It localises to the secreted. It is found in the cell surface. The catalysed reaction is (2R)-2-phosphoglycerate = phosphoenolpyruvate + H2O. The protein operates within carbohydrate degradation; glycolysis; pyruvate from D-glyceraldehyde 3-phosphate: step 4/5. Functionally, catalyzes the reversible conversion of 2-phosphoglycerate (2-PG) into phosphoenolpyruvate (PEP). It is essential for the degradation of carbohydrates via glycolysis. The polypeptide is Enolase (Saccharolobus islandicus (strain M.16.27) (Sulfolobus islandicus)).